Here is a 597-residue protein sequence, read N- to C-terminus: Arginine--tRNA ligase (597 aa).

The short motif at 125-135 (PNTNKPLHLGH) is the 'HIGH' region element.

The protein belongs to the class-I aminoacyl-tRNA synthetase family. As to quaternary structure, monomer.

The protein localises to the cytoplasm. The catalysed reaction is tRNA(Arg) + L-arginine + ATP = L-arginyl-tRNA(Arg) + AMP + diphosphate. This chain is Arginine--tRNA ligase, found in Parabacteroides distasonis (strain ATCC 8503 / DSM 20701 / CIP 104284 / JCM 5825 / NCTC 11152).